The following is a 387-amino-acid chain: Putative glutamate--cysteine ligase 2 (387 aa).

This sequence belongs to the glutamate--cysteine ligase type 2 family. YbdK subfamily.

It catalyses the reaction L-cysteine + L-glutamate + ATP = gamma-L-glutamyl-L-cysteine + ADP + phosphate + H(+). ATP-dependent carboxylate-amine ligase which exhibits weak glutamate--cysteine ligase activity. The chain is Putative glutamate--cysteine ligase 2 from Trichormus variabilis (strain ATCC 29413 / PCC 7937) (Anabaena variabilis).